A 434-amino-acid chain; its full sequence is UDP-N-acetylmuramoylalanine--D-glutamate ligase (434 aa).

Gly117–Thr123 is a binding site for ATP.

It belongs to the MurCDEF family.

It localises to the cytoplasm. The catalysed reaction is UDP-N-acetyl-alpha-D-muramoyl-L-alanine + D-glutamate + ATP = UDP-N-acetyl-alpha-D-muramoyl-L-alanyl-D-glutamate + ADP + phosphate + H(+). Its pathway is cell wall biogenesis; peptidoglycan biosynthesis. In terms of biological role, cell wall formation. Catalyzes the addition of glutamate to the nucleotide precursor UDP-N-acetylmuramoyl-L-alanine (UMA). This is UDP-N-acetylmuramoylalanine--D-glutamate ligase from Sphingopyxis alaskensis (strain DSM 13593 / LMG 18877 / RB2256) (Sphingomonas alaskensis).